The chain runs to 132 residues: Protein NrdI (132 aa).

This sequence belongs to the NrdI family.

Probably involved in ribonucleotide reductase function. In Agrobacterium fabrum (strain C58 / ATCC 33970) (Agrobacterium tumefaciens (strain C58)), this protein is Protein NrdI.